We begin with the raw amino-acid sequence, 219 residues long: 23.6 kDa heat shock protein, mitochondrial (219 aa).

A mitochondrion-targeting transit peptide spans 1–29 (MALARQCLSKRLAAGCALARPLHAASPVA). The sHSP domain occupies 104–219 (QVAETLTRPL…KRSVTEVKVR (116 aa)).

The protein belongs to the small heat shock protein (HSP20) family. As to quaternary structure, may form oligomeric structures.

It localises to the mitochondrion. The protein is 23.6 kDa heat shock protein, mitochondrial (HSP23.6) of Oryza sativa subsp. japonica (Rice).